The chain runs to 820 residues: TORTIFOLIA1-like protein 2 (820 aa).

HEAT repeat units lie at residues 61–98, 102–139, 146–183, 187–224, and 228–265; these read DKVSCFLSCILDTDSEQKSAVRKECIRLMGTLARFHEG, PYLGKMVSSIVKRLKDPDSVVRDACIETMGVLASKMSC, GVFVSLVKPLFEAIGDQNKYVQSGAALCLARVIDSSPE, AIIQRMLMRTVKLLNNSHFIAKPAVIELNRSIILAGGA, and SVLSSAMSSFQDALKNKDWTTRKAASVALMEIAATGEK. Residues 304–321 are compositionally biased toward low complexity; it reads PGSDSPEPSETESSVKES. 3 disordered regions span residues 304 to 325, 357 to 377, and 584 to 644; these read PGSDSPEPSETESSVKESYNGA, PVSARQPPTRYNDDPRKSNQD, and GSTI…GKTG. The segment covering 367–377 has biased composition (basic and acidic residues); it reads YNDDPRKSNQD. Polar residues predominate over residues 584–613; sequence GSTISPRLSSCTSRTSTDIRNRQSTLSTSK.

The sequence is that of TORTIFOLIA1-like protein 2 from Arabidopsis thaliana (Mouse-ear cress).